The chain runs to 287 residues: MATIATMPVPETRANHTIYINNLNEKIKKDELKKSLYAIFSQFGQILDILVSRIMKMRGQAFVIFKEVTSATNALRSMQGFPFYDKPMRIQYAKTDSDIIAKMKGTYVERDRKREKRKPKSQETPAAKKAVQGGAAAPVVGAVQPVPGMPPMPQAPRIMHHMPGQPPYMPPPGMIPPPGLAPGQIPPGAMPPQQLMPGQMPPAQPLSENPPNHILFLTNLPEETNELMLSMLFNQFPGFKEVRLVPGRHDIAFVEFDNEVQAGAARDALQGFKITQNNAMKISFAKK.

Residues 16–95 (HTIYINNLNE…KPMRIQYAKT (80 aa)) enclose the RRM 1 domain. N6-acetyllysine is present on lysine 66. Positions 106–134 (TYVERDRKREKRKPKSQETPAAKKAVQGG) are disordered. Residues 125–134 (PAAKKAVQGG) show a composition bias toward low complexity. Arginine 157 is subject to Omega-N-methylarginine. An RRM 2 domain is found at 213-287 (HILFLTNLPE…NAMKISFAKK (75 aa)).

This sequence belongs to the RRM U1 A/B'' family. In terms of assembly, U1 snRNP is composed of the 7 core Sm proteins SNRPB, SNRPD1, SNRPD2, SNRPD3, SNRPE, SNRPF and SNRPG that assemble in a heptameric protein ring on the Sm site of the small nuclear RNA to form the core snRNP, and at least three U1 snRNP-specific proteins SNRNP70/U1-70K, SNRPA/U1-A and SNRPC/U1-C. Interacts with SFPQ; component of a snRNP-free complex with SFPQ. Interacts with IVNS1ABP (via BACK domain); the interaction is indirect.

The protein localises to the nucleus. Its function is as follows. Component of the spliceosomal U1 snRNP, which is essential for recognition of the pre-mRNA 5' splice-site and the subsequent assembly of the spliceosome. U1 snRNP is the first snRNP to interact with pre-mRNA. This interaction is required for the subsequent binding of U2 snRNP and the U4/U6/U5 tri-snRNP. SNRPA binds stem loop II of U1 snRNA. In a snRNP-free form (SF-A) may be involved in coupled pre-mRNA splicing and polyadenylation process. May bind preferentially to the 5'-UGCAC-3' motif on RNAs. The polypeptide is U1 small nuclear ribonucleoprotein A (Snrpa) (Mus musculus (Mouse)).